The primary structure comprises 448 residues: Phosphoglucosamine mutase (448 aa).

Ser-100 acts as the Phosphoserine intermediate in catalysis. 4 residues coordinate Mg(2+): Ser-100, Asp-240, Asp-242, and Asp-244. Ser-100 carries the phosphoserine modification.

The protein belongs to the phosphohexose mutase family. The cofactor is Mg(2+). Post-translationally, activated by phosphorylation.

The enzyme catalyses alpha-D-glucosamine 1-phosphate = D-glucosamine 6-phosphate. In terms of biological role, catalyzes the conversion of glucosamine-6-phosphate to glucosamine-1-phosphate. The protein is Phosphoglucosamine mutase of Alkaliphilus metalliredigens (strain QYMF).